A 568-amino-acid chain; its full sequence is Methionine--tRNA ligase (568 aa).

Positions 10–20 (PYVQSVPHLGN) match the 'HIGH' region motif. The Zn(2+) site is built by Cys143, Cys146, Cys156, and Cys159. The 'KMSKS' region signature appears at 333–337 (KFSKS). Position 336 (Lys336) interacts with ATP.

The protein belongs to the class-I aminoacyl-tRNA synthetase family. MetG type 1 subfamily. The cofactor is Zn(2+).

Its subcellular location is the cytoplasm. It carries out the reaction tRNA(Met) + L-methionine + ATP = L-methionyl-tRNA(Met) + AMP + diphosphate. Its function is as follows. Is required not only for elongation of protein synthesis but also for the initiation of all mRNA translation through initiator tRNA(fMet) aminoacylation. This Metallosphaera sedula (strain ATCC 51363 / DSM 5348 / JCM 9185 / NBRC 15509 / TH2) protein is Methionine--tRNA ligase.